We begin with the raw amino-acid sequence, 415 residues long: Phosphoglycerate kinase (415 aa).

Substrate-binding positions include 28 to 30 (DLN), Arg-44, 67 to 70 (HQGR), Arg-124, and Arg-164. Residues Glu-336 and 362-365 (GGHF) each bind ATP.

The protein belongs to the phosphoglycerate kinase family.

It localises to the cytoplasm. It catalyses the reaction (2R)-3-phosphoglycerate + ATP = (2R)-3-phospho-glyceroyl phosphate + ADP. Its pathway is carbohydrate degradation; glycolysis; pyruvate from D-glyceraldehyde 3-phosphate: step 2/5. The chain is Phosphoglycerate kinase (pgk) from Aeropyrum pernix (strain ATCC 700893 / DSM 11879 / JCM 9820 / NBRC 100138 / K1).